We begin with the raw amino-acid sequence, 454 residues long: Chromosomal replication initiator protein DnaA (454 aa).

The segment at methionine 1–valine 71 is domain I, interacts with DnaA modulators. The interval valine 71–alanine 112 is domain II. The interval valine 82 to threonine 108 is disordered. A compositionally biased stretch (low complexity) spans alanine 84 to alanine 99. Positions proline 113–alanine 334 are domain III, AAA+ region. Residues glycine 157, glycine 159, lysine 160, and threonine 161 each coordinate ATP. A domain IV, binds dsDNA region spans residues serine 335 to glutamate 454.

Belongs to the DnaA family. Oligomerizes as a right-handed, spiral filament on DNA at oriC.

It localises to the cytoplasm. Functionally, plays an essential role in the initiation and regulation of chromosomal replication. ATP-DnaA binds to the origin of replication (oriC) to initiate formation of the DNA replication initiation complex once per cell cycle. Binds the DnaA box (a 9 base pair repeat at the origin) and separates the double-stranded (ds)DNA. Forms a right-handed helical filament on oriC DNA; dsDNA binds to the exterior of the filament while single-stranded (ss)DNA is stabiized in the filament's interior. The ATP-DnaA-oriC complex binds and stabilizes one strand of the AT-rich DNA unwinding element (DUE), permitting loading of DNA polymerase. After initiation quickly degrades to an ADP-DnaA complex that is not apt for DNA replication. Binds acidic phospholipids. This is Chromosomal replication initiator protein DnaA from Roseobacter denitrificans (strain ATCC 33942 / OCh 114) (Erythrobacter sp. (strain OCh 114)).